A 753-amino-acid chain; its full sequence is Inactive protein-tyrosine phosphatase egg-5 (753 aa).

2 disordered regions span residues 26-46 (TSLQ…STDN) and 77-116 (RKKV…YAAP). Residues 35-46 (NTDDSSADSTDN) are compositionally biased toward low complexity. Over residues 84-94 (AQKDRRSKERL) the composition is skewed to basic and acidic residues. In terms of domain architecture, Tyrosine-protein phosphatase spans 408–661 (MERRFEILEN…IFVHRLVAFF (254 aa)).

The protein belongs to the protein-tyrosine phosphatase family. Part of a complex, consisting of pseudophosphatases egg-3, egg-4, egg-5 and kinase mbk-2; this complex is required for the oocyte-to-zygote transition. Interacts (via tyrosine-protein phosphatase domain) with kinase mbk-2 (via 'Tyr-619' and 'Tyr-621'); mbk-2 tyrosine phosphorylation enhances the interaction.

The protein resides in the cytoplasm. It localises to the cell cortex. In terms of biological role, inactive phosphatase which acts redundantly with egg-4 in the oocyte-to-zygote transition. Required for polarized cortical actin cytoskeleton rearrangement in the oocyte before and after fertilization. Together with egg-4, required for the cortical localization of kinase mbk-2 in maturing oocyte until the end of meiosis I. Also required for kinase mbk-2, pseudophosphatase egg-3 and chitin synthase chs-1 localization to cytoplasmic foci after fertilization. The sequence is that of Inactive protein-tyrosine phosphatase egg-5 from Caenorhabditis elegans.